We begin with the raw amino-acid sequence, 1041 residues long: MSSQQFPRQAVSMPPPQVSNSGASVGQNVQGDEVAREIDVQSRDPLGASTVLPSRDDKQEPVVVRPYPQVQMLTSHHPLQPAPSLTMTAQPAHLTSAVPLSFSENILKTPKSTMPSRPIAPAPPSALSAVPKVSGQGTVTMESGLPQTSAIPVATISGQQGHPNSLHHIMAATNVQMSIIRSGAPGPPLHIGASHLPRGAAAAAVMSSSKVTTMLRPASAQIPSAAASQSATQHIIHPPIQSRPPVTTTSVSPAVVATVSATRAQSPVITTTPAHAAEPVLRPTLAFQQHPPPAAISIQRSAQARDAATTRITLPTHPALGGQKPQLHAMTQKTLFGTGNPVAAATVAPILATNTLPSVTTSGSAPHTQVSTSTIVTMTMPTHSSHATAGTASNIPVAKVVPQQITHTSPRIQSEYGTERGNLIPIPGHRASPNPMTMEARSENRQPVPVQLQYFLPTYPPSAYPLTAHTYTPITSSVSTIRQYPVSAQAPNSAITAQSVASTVHLNPMQLINMDTSHTRHIQGIQPAPVSAQGIQPSPFSAQGIQATPISTQGIHPTPINTQAIHPATSITNQGVQTSSVSSQQASSEPKSSVVLAEGATIIANPINSSFSATPAGTTVMQSHSQSPGIGSSPAQGSSPRPSILRKKPATEGLSVRKSLIPPHPGDAVSPRHDSALRSTSASPRPAGAKPKADLHVSVAPGVTGDPGAADQPSAAASLPSSHHPTAAVPSPPSQPVSGPMPSSIHITPATIPALSAPPPLLSNAPSGAVMPEDKMKEEAEPMDILRPVSAVPPLPPNSISSPLTVLANNISGPAGELPPGASPRKKPRKQQHVISTEEGDMMETNSTDEERCHAVKPFTSRPEKRKSPPKEYIDEEGVRYVPVRPRPPITLLRHYRNPWKAAYHHFQRYTDVRVKEEKKLTLQDVANQKGITCRVQGWKTHLCAAQLLQLIKLEQDVFERLTVLQEGLVPKKKTATDDDLHRINELIQGNMQRCKLVMDQITESRDCMLKVLDHKDRVLKLLNKSGASRRLSKVKPKDKM.

5 disordered regions span residues Met1 to Val62, Lys111 to Pro131, Thr572 to Ser592, Thr614 to Ala769, and Val806 to Arg852. Polar residues predominate over residues Val18 to Gln30. Over residues Glu33–Ser42 the composition is skewed to basic and acidic residues. Residues Val576–Ser592 show a composition bias toward low complexity. Residues Thr614–Arg641 are compositionally biased toward polar residues. Residues Pro707–Ala728 show a composition bias toward low complexity.

Belongs to the SAP130 family.

It localises to the nucleus. Functionally, acts as a transcriptional repressor. This is Histone deacetylase complex subunit SAP130-B (sap130-b) from Xenopus laevis (African clawed frog).